The primary structure comprises 258 residues: Hydroxyacylglutathione hydrolase (258 aa).

Zn(2+)-binding residues include H56, H58, D60, H61, H112, D132, and H170.

The protein belongs to the metallo-beta-lactamase superfamily. Glyoxalase II family. As to quaternary structure, monomer. Requires Zn(2+) as cofactor.

It catalyses the reaction an S-(2-hydroxyacyl)glutathione + H2O = a 2-hydroxy carboxylate + glutathione + H(+). The protein operates within secondary metabolite metabolism; methylglyoxal degradation; (R)-lactate from methylglyoxal: step 2/2. Its function is as follows. Thiolesterase that catalyzes the hydrolysis of S-D-lactoyl-glutathione to form glutathione and D-lactic acid. The protein is Hydroxyacylglutathione hydrolase of Pseudomonas aeruginosa (strain ATCC 15692 / DSM 22644 / CIP 104116 / JCM 14847 / LMG 12228 / 1C / PRS 101 / PAO1).